We begin with the raw amino-acid sequence, 417 residues long: Tyrosine--tRNA ligase (417 aa).

Tyr-39 is a binding site for L-tyrosine. Residues 44–53 (CTAPSLHVGH) carry the 'HIGH' region motif. 2 residues coordinate L-tyrosine: Tyr-176 and Gln-180. The 'KMSKS' region signature appears at 236-240 (KMGKT). An ATP-binding site is contributed by Lys-239. In terms of domain architecture, S4 RNA-binding spans 350–417 (AGVLALFVKA…KKRHVLLRPA (68 aa)).

It belongs to the class-I aminoacyl-tRNA synthetase family. TyrS type 1 subfamily. In terms of assembly, homodimer.

Its subcellular location is the cytoplasm. It catalyses the reaction tRNA(Tyr) + L-tyrosine + ATP = L-tyrosyl-tRNA(Tyr) + AMP + diphosphate + H(+). Functionally, catalyzes the attachment of tyrosine to tRNA(Tyr) in a two-step reaction: tyrosine is first activated by ATP to form Tyr-AMP and then transferred to the acceptor end of tRNA(Tyr). In Nitrobacter winogradskyi (strain ATCC 25391 / DSM 10237 / CIP 104748 / NCIMB 11846 / Nb-255), this protein is Tyrosine--tRNA ligase.